A 60-amino-acid polypeptide reads, in one-letter code: Potassium channel toxin alpha-KTx 12.7 (60 aa).

The signal sequence occupies residues 1-22 (MSNMPVLIITLLLFSMYISTAA). 3 disulfide bridges follow: cysteine 30–cysteine 51, cysteine 36–cysteine 56, and cysteine 40–cysteine 58.

Belongs to the short scorpion toxin superfamily. Potassium channel inhibitor family. Alpha-KTx 12 subfamily. As to expression, expressed by the venom gland.

The protein localises to the secreted. In terms of biological role, inhibits voltage-gated potassium channels. The protein is Potassium channel toxin alpha-KTx 12.7 of Lychas mucronatus (Chinese swimming scorpion).